The sequence spans 100 residues: Integration host factor subunit alpha (100 aa).

Residues 53 to 72 form a disordered region; that stretch reads FDLRDKKQRPGRNPKTGEEI.

It belongs to the bacterial histone-like protein family. As to quaternary structure, heterodimer of an alpha and a beta chain.

Its function is as follows. This protein is one of the two subunits of integration host factor, a specific DNA-binding protein that functions in genetic recombination as well as in transcriptional and translational control. This is Integration host factor subunit alpha from Marinobacter nauticus (strain ATCC 700491 / DSM 11845 / VT8) (Marinobacter aquaeolei).